Reading from the N-terminus, the 655-residue chain is NAD(P)H-quinone oxidoreductase subunit 5, chloroplastic (655 aa).

The next 16 membrane-spanning stretches (helical) occupy residues 7-27, 40-60, 89-109, 124-144, 147-167, 185-205, 226-246, 265-285, 296-316, 334-354, 361-381, 402-422, 434-454, 488-508, 533-553, and 635-655; these read YAWLIPILPFLGSMIIGLGLI, FAFFNIVLLGIALIFSISILI, IDPLTSVMLVLVTSVAILVMI, FFAYLSLFTASMLGLVLSPNL, IYVFWELVGMCSYLLIGFWFT, GDFGLFLGILGLYWVTGSFEF, HPVQVELLVLFNLLVFLGPMA, TPISALIHAATMVAAGVFLVA, IVMGFIAWIGAITAIIAAIIA, LGYMIMAMGVGSYTAGLFHLI, ALLFLGSGSVIHGMEPVVGFN, AITFLLGTLSLCGIPPMACFW, AQPILWIIAWVTAGLTSFYMF, ILIPLIILALVTTLVGFVGTP, LSMSGSSVGIALIGLTLASLI, and QSYVFVIIFATLIFVLASQGF.

This sequence belongs to the complex I subunit 5 family. NDH is composed of at least 16 different subunits, 5 of which are encoded in the nucleus.

It is found in the plastid. The protein resides in the chloroplast thylakoid membrane. The enzyme catalyses a plastoquinone + NADH + (n+1) H(+)(in) = a plastoquinol + NAD(+) + n H(+)(out). It catalyses the reaction a plastoquinone + NADPH + (n+1) H(+)(in) = a plastoquinol + NADP(+) + n H(+)(out). Its function is as follows. NDH shuttles electrons from NAD(P)H:plastoquinone, via FMN and iron-sulfur (Fe-S) centers, to quinones in the photosynthetic chain and possibly in a chloroplast respiratory chain. The immediate electron acceptor for the enzyme in this species is believed to be plastoquinone. Couples the redox reaction to proton translocation, and thus conserves the redox energy in a proton gradient. This chain is NAD(P)H-quinone oxidoreductase subunit 5, chloroplastic (ndhF), found in Chlorokybus atmophyticus (Soil alga).